The chain runs to 207 residues: Ras-related protein rab7 (207 aa).

GTP-binding positions include G15 to T22, S34 to T40, D63 to Q67, N125 to D128, and A156 to K157. The short motif at Y37–F45 is the Effector region element. Residues C205 and C207 are each lipidated (S-geranylgeranyl cysteine). C207 is modified (cysteine methyl ester).

Belongs to the small GTPase superfamily. Rab family. (Microbial infection) Interacts with Singapore grouper iridoviral proteins VP69 (ORF69) and VP101 (ORF101). In terms of tissue distribution, ubiquitously expressed. Expressed in liver, spleen, kidney, brain, intestine, heart, skin, muscle, gill and stomach.

It localises to the late endosome membrane. Its subcellular location is the lysosome membrane. Key regulator in endo-lysosomal trafficking. Governs early-to-late endosomal maturation, microtubule minus-end as well as plus-end directed endosomal migration and positioning, and endosome-lysosome transport through different protein-protein interaction cascades. Plays important roles in microbial pathogen infection and survival, as well as in participating in the life cycle of viruses. This Epinephelus coioides (Orange-spotted grouper) protein is Ras-related protein rab7.